Consider the following 113-residue polypeptide: Cell cycle protein GpsB (113 aa).

Residues 36 to 68 (LDMVIKDYSTFTQEIEALQAENIRLVQELDNAP) adopt a coiled-coil conformation.

The protein belongs to the GpsB family. In terms of assembly, forms polymers through the coiled coil domains. Interacts with PBP1, MreC and EzrA.

Its subcellular location is the cytoplasm. In terms of biological role, divisome component that associates with the complex late in its assembly, after the Z-ring is formed, and is dependent on DivIC and PBP2B for its recruitment to the divisome. Together with EzrA, is a key component of the system that regulates PBP1 localization during cell cycle progression. Its main role could be the removal of PBP1 from the cell pole after pole maturation is completed. Also contributes to the recruitment of PBP1 to the division complex. Not essential for septum formation. The polypeptide is Cell cycle protein GpsB (Listeria monocytogenes serotype 4b (strain CLIP80459)).